Here is a 78-residue protein sequence, read N- to C-terminus: Small ribosomal subunit protein bS18 (78 aa).

Belongs to the bacterial ribosomal protein bS18 family. Part of the 30S ribosomal subunit. Forms a tight heterodimer with protein bS6.

Functionally, binds as a heterodimer with protein bS6 to the central domain of the 16S rRNA, where it helps stabilize the platform of the 30S subunit. In Levilactobacillus brevis (strain ATCC 367 / BCRC 12310 / CIP 105137 / JCM 1170 / LMG 11437 / NCIMB 947 / NCTC 947) (Lactobacillus brevis), this protein is Small ribosomal subunit protein bS18.